The primary structure comprises 461 residues: Glycolipid 2-alpha-mannosyltransferase 2 (461 aa).

Topologically, residues 1–12 are cytoplasmic; it reads MKPSIFYSSRQP. A helical; Signal-anchor for type II membrane protein transmembrane segment spans residues 13-35; the sequence is YLKYLAIILTTITIYVLTHSSYS. Residues 35–52 are compositionally biased toward polar residues; sequence SADPNINDVTTKPISETV. The disordered stretch occupies residues 35-138; sequence SADPNINDVT…SSSKDPVKPE (104 aa). The Lumenal segment spans residues 36–461; the sequence is ADPNINDVTT…QKPKEWEKYQ (426 aa). Low complexity-rich tracts occupy residues 61-70 and 106-116; these read SSPEQQQQQP and PKSSSSSPQQQ. Positions 117–126 are enriched in basic and acidic residues; sequence EKQDTKKESE. Glutamate 349 serves as the catalytic Nucleophile.

Belongs to the glycosyltransferase 15 family.

The protein localises to the golgi apparatus membrane. In terms of biological role, involved in O-glycosylation of cell wall and secreted proteins. Transfers an alpha-D-mannosyl residue from GDP-mannose into lipid-linked oligosaccharide, forming an alpha-(1-&gt;2)-D-mannosyl-D-mannose linkage. Mainly responsible for the addition of the third mannose residue in an O-linked mannose pentamer. Can also substitute for MNT1 by adding the second mannose residue. Important for adherence to host surfaces and for virulence. The protein is Glycolipid 2-alpha-mannosyltransferase 2 (MNT2) of Candida albicans (strain SC5314 / ATCC MYA-2876) (Yeast).